The following is a 344-amino-acid chain: RNA 3'-terminal phosphate cyclase (344 aa).

Residues Gln103 and 283 to 287 contribute to the ATP site; that span reads HLADQ. The active-site Tele-AMP-histidine intermediate is the His308.

This sequence belongs to the RNA 3'-terminal cyclase family. Type 1 subfamily.

The protein resides in the cytoplasm. It catalyses the reaction a 3'-end 3'-phospho-ribonucleotide-RNA + ATP = a 3'-end 2',3'-cyclophospho-ribonucleotide-RNA + AMP + diphosphate. Functionally, catalyzes the conversion of 3'-phosphate to a 2',3'-cyclic phosphodiester at the end of RNA. The mechanism of action of the enzyme occurs in 3 steps: (A) adenylation of the enzyme by ATP; (B) transfer of adenylate to an RNA-N3'P to produce RNA-N3'PP5'A; (C) and attack of the adjacent 2'-hydroxyl on the 3'-phosphorus in the diester linkage to produce the cyclic end product. The biological role of this enzyme is unknown but it is likely to function in some aspects of cellular RNA processing. This chain is RNA 3'-terminal phosphate cyclase, found in Salmonella agona (strain SL483).